Here is a 249-residue protein sequence, read N- to C-terminus: Probable transcriptional regulatory protein Sare_1779 (249 aa).

Belongs to the TACO1 family.

It is found in the cytoplasm. The polypeptide is Probable transcriptional regulatory protein Sare_1779 (Salinispora arenicola (strain CNS-205)).